The primary structure comprises 252 residues: Tabinhibitin 9 (252 aa).

The first 23 residues, 1–23 (MTSNLYYVLISPYSLAYMVQYRS), serve as a signal peptide directing secretion. Residues 32–34 (RGD) carry the Cell attachment site motif. The SCP domain occupies 63 to 207 (YIRSTMCEIM…KARAFFTCNF (145 aa)).

It belongs to the CRISP family. In terms of tissue distribution, expressed in salivary glands.

Its subcellular location is the secreted. Its function is as follows. Inhibits platelet aggregation induced by all agonists tested (ADP, arachidonic acid, the thromboxane A2 analog U46619, thrombin, and snake venom snaclecs (TMVA that activates platelet through GPIB, and stejnulxin that specifically acts through GPVI (GP6))). May act by competing with fibrinogen for binding to glycoprotein IIb/IIIa (ITGA2B/ITGB3). The chain is Tabinhibitin 9 from Tabanus yao (Horsefly).